We begin with the raw amino-acid sequence, 79 residues long: Protein OPG081 (79 aa).

At 1-8 (MVDAITVL) the chain is on the intravirion side. The helical transmembrane segment at 9-29 (TAIGITVLMLLMVISGAAMIV) threads the bilayer. Residues 30–47 (KELNPNDIFTMQSLKFNR) lie on the Virion surface side of the membrane. A helical membrane pass occupies residues 48 to 68 (AVTIFKYIGLFIYIPGTIILY). Topologically, residues 69–79 (ATYVKSLLMKS) are intravirion.

This sequence belongs to the orthopoxvirus OPG081 family.

Its subcellular location is the virion membrane. In terms of biological role, envelope protein. The polypeptide is Protein OPG081 (OPG081) (Vaccinia virus (strain Copenhagen) (VACV)).